The sequence spans 1202 residues: Protein HASTY 1 (1202 aa).

Met-1 is modified (N-acetylmethionine).

The protein belongs to the exportin family. Interacts with RAN1. In terms of tissue distribution, expressed in roots, leaves and floral buds.

It localises to the nucleus. In terms of biological role, nucleocytoplasmic transporter involved in the nuclear export of microRNAs (miRNAs). Required for several miRNAs accumulation. Specifically required for miR156 accumulation which targets SPL3, SPL4 and SPL5 transcription factors. Involved in plant development through its role in miRNAs processing. Required for vegetative phase change and vegetative to reproductive phase transition. Functionally dependent on RAN1 binding. Does not seem to be involved in small interfering RNAs (siRNAs) processing. The protein is Protein HASTY 1 (HST1) of Arabidopsis thaliana (Mouse-ear cress).